Consider the following 407-residue polypeptide: DAZ-associated protein 1 (407 aa).

N-acetylmethionine is present on Met-1. RRM domains lie at 10-97 and 113-190; these read GKLF…RTRP and NKIF…RAEP. The tract at residues 74 to 117 is disordered; that stretch reads TLDGRNIDPKPCTPRGMQPERTRPKEGWQKGPRSDNSKSNKIFV. The segment covering 91 to 111 has biased composition (basic and acidic residues); that stretch reads QPERTRPKEGWQKGPRSDNSK. Residue Lys-150 is modified to N6-acetyllysine. The segment covering 185 to 194 has biased composition (basic and acidic residues); it reads VKRAEPRDSK. The segment at 185–407 is disordered; sequence VKRAEPRDSK…NVQGFHPYRR (223 aa). Positions 195–207 are enriched in polar residues; the sequence is SQAPGQPGASQWG. Positions 247–262 are enriched in pro residues; it reads GPPPAGRGAPPPPPPF. An Omega-N-methylarginine modification is found at Arg-253. Over residues 280–294 the composition is skewed to low complexity; the sequence is FPQGYGAPPQFSFGY. Over residues 295–315 the composition is skewed to pro residues; sequence GPPPPPPDQFAPPGVPPPPAT. Positions 364–379 are enriched in low complexity; that stretch reads SDPSQQPPSYGGPSVP. A compositionally biased stretch (gly residues) spans 380–393; sequence GSGGPPAGGSGFGR.

In terms of assembly, interacts with DAZ and DAZL. Post-translationally, acetylation at Lys-150 is predominantly observed in the nuclear fraction, and may regulate nucleocytoplasmic transport. Mainly expressed in testis. Expressed to a lower level in thymus. Weakly or not expressed in heart, liver, brain, placenta, lung, skeletal muscle, kidney and pancreas.

The protein resides in the cytoplasm. Its subcellular location is the nucleus. Functionally, RNA-binding protein, which may be required during spermatogenesis. This chain is DAZ-associated protein 1 (DAZAP1), found in Homo sapiens (Human).